We begin with the raw amino-acid sequence, 296 residues long: MGAQIRVYRQKISSTTSMRKIFKAMELIATSRIGKARARVAASLPYANAITRAVSAVASQSEIDHPLTTEPEQIRRAAVLVITSDRGLAGSYSASVLKQAEGLNELLHAEGKEVKTYLVGRKSQAYFDFRNREYARVWTGGTDAPEFGTAREIGAALLADFAADFEDGGVDEIHVVYTRFKSMVTQEPTVIRLLPLEVVEEEAASESDLLPLYEFEPETEQVLDALLPRYIESRLFAAMLQAAASELAARQRAMKSAGDNATDLIKKYTRLRNTARQAEITQELSEIVAGADALAS.

Belongs to the ATPase gamma chain family. In terms of assembly, F-type ATPases have 2 components, CF(1) - the catalytic core - and CF(0) - the membrane proton channel. CF(1) has five subunits: alpha(3), beta(3), gamma(1), delta(1), epsilon(1). CF(0) has three main subunits: a, b and c.

The protein resides in the cell membrane. Functionally, produces ATP from ADP in the presence of a proton gradient across the membrane. The gamma chain is believed to be important in regulating ATPase activity and the flow of protons through the CF(0) complex. The chain is ATP synthase gamma chain from Pseudarthrobacter chlorophenolicus (strain ATCC 700700 / DSM 12829 / CIP 107037 / JCM 12360 / KCTC 9906 / NCIMB 13794 / A6) (Arthrobacter chlorophenolicus).